Consider the following 509-residue polypeptide: Lanosterol 14-alpha demethylase (509 aa).

Residues 30 to 50 (GNLLSMLLIACAFTLSLVYLF) form a helical membrane-spanning segment. Cysteine 455 lines the heme pocket.

The protein belongs to the cytochrome P450 family. It depends on heme as a cofactor. Ubiquitinated by MARCHF6, leading to proteasomal degradation.

Its subcellular location is the endoplasmic reticulum membrane. It localises to the microsome membrane. The catalysed reaction is a 14alpha-methyl steroid + 3 reduced [NADPH--hemoprotein reductase] + 3 O2 = a Delta(14) steroid + formate + 3 oxidized [NADPH--hemoprotein reductase] + 4 H2O + 4 H(+). It carries out the reaction lanosterol + 3 reduced [NADPH--hemoprotein reductase] + 3 O2 = 4,4-dimethyl-5alpha-cholesta-8,14,24-trien-3beta-ol + formate + 3 oxidized [NADPH--hemoprotein reductase] + 4 H2O + 4 H(+). It catalyses the reaction 24,25-dihydrolanosterol + 3 reduced [NADPH--hemoprotein reductase] + 3 O2 = 4,4-dimethyl-8,14-cholestadien-3beta-ol + formate + 3 oxidized [NADPH--hemoprotein reductase] + 4 H2O + 4 H(+). The enzyme catalyses a 14alpha-methyl steroid + reduced [NADPH--hemoprotein reductase] + O2 = a 14alpha-hydroxymethyl steroid + oxidized [NADPH--hemoprotein reductase] + H2O + H(+). The catalysed reaction is a 14alpha-hydroxymethyl steroid + reduced [NADPH--hemoprotein reductase] + O2 = a 14alpha-formyl steroid + oxidized [NADPH--hemoprotein reductase] + 2 H2O + H(+). It carries out the reaction a 14alpha-formyl steroid + reduced [NADPH--hemoprotein reductase] + O2 = a Delta(14) steroid + formate + oxidized [NADPH--hemoprotein reductase] + H2O + 2 H(+). It catalyses the reaction lanosterol + reduced [NADPH--hemoprotein reductase] + O2 = 32-hydroxylanosterol + oxidized [NADPH--hemoprotein reductase] + H2O + H(+). The enzyme catalyses 32-hydroxylanosterol + reduced [NADPH--hemoprotein reductase] + O2 = 32-oxolanosterol + oxidized [NADPH--hemoprotein reductase] + 2 H2O + H(+). The catalysed reaction is 32-oxolanosterol + reduced [NADPH--hemoprotein reductase] + O2 = 4,4-dimethyl-5alpha-cholesta-8,14,24-trien-3beta-ol + formate + oxidized [NADPH--hemoprotein reductase] + H2O + 2 H(+). It carries out the reaction 24,25-dihydrolanosterol + reduced [NADPH--hemoprotein reductase] + O2 = 32-hydroxy-24,25-dihydrolanosterol + oxidized [NADPH--hemoprotein reductase] + H2O + H(+). It catalyses the reaction 32-hydroxy-24,25-dihydrolanosterol + reduced [NADPH--hemoprotein reductase] + O2 = 32-oxo-24,25-dihydrolanosterol + oxidized [NADPH--hemoprotein reductase] + 2 H2O + H(+). The enzyme catalyses 32-oxo-24,25-dihydrolanosterol + reduced [NADPH--hemoprotein reductase] + O2 = 4,4-dimethyl-8,14-cholestadien-3beta-ol + formate + oxidized [NADPH--hemoprotein reductase] + H2O + 2 H(+). It functions in the pathway steroid biosynthesis; zymosterol biosynthesis; zymosterol from lanosterol: step 1/6. Inhibited by azalanstat. Inhibited by azole antifungal agents ketoconazole, itraconazole and fluconazole. Sterol 14alpha-demethylase that plays a critical role in the cholesterol biosynthesis pathway, being cholesterol the major sterol component in mammalian membranes as well as a precursor for bile acid and steroid hormone synthesis. Cytochrome P450 monooxygenase that catalyzes the three-step oxidative removal of the 14alpha-methyl group (C-32) of sterols such as lanosterol (lanosta-8,24-dien-3beta-ol) and 24,25-dihydrolanosterol (DHL) in the form of formate, and converts the sterols to 4,4-dimethyl-5alpha-cholesta-8,14,24-trien-3beta-ol and 4,4-dimethyl-8,14-cholestadien-3beta-ol, respectively, which are intermediates of cholesterol biosynthesis. Can also demethylate substrates not intrinsic to mammals, such as eburicol (24-methylene-24,25-dihydrolanosterol), but at a lower rate than DHL. This is Lanosterol 14-alpha demethylase from Pongo abelii (Sumatran orangutan).